Consider the following 447-residue polypeptide: tRNA-2-methylthio-N(6)-dimethylallyladenosine synthase (447 aa).

The 118-residue stretch at K3–E120 folds into the MTTase N-terminal domain. Residues C12, C49, C83, C157, C161, and C164 each contribute to the [4Fe-4S] cluster site. A Radical SAM core domain is found at R143–R375. Residues E378–E441 enclose the TRAM domain.

This sequence belongs to the methylthiotransferase family. MiaB subfamily. As to quaternary structure, monomer. Requires [4Fe-4S] cluster as cofactor.

Its subcellular location is the cytoplasm. The enzyme catalyses N(6)-dimethylallyladenosine(37) in tRNA + (sulfur carrier)-SH + AH2 + 2 S-adenosyl-L-methionine = 2-methylsulfanyl-N(6)-dimethylallyladenosine(37) in tRNA + (sulfur carrier)-H + 5'-deoxyadenosine + L-methionine + A + S-adenosyl-L-homocysteine + 2 H(+). Its function is as follows. Catalyzes the methylthiolation of N6-(dimethylallyl)adenosine (i(6)A), leading to the formation of 2-methylthio-N6-(dimethylallyl)adenosine (ms(2)i(6)A) at position 37 in tRNAs that read codons beginning with uridine. The sequence is that of tRNA-2-methylthio-N(6)-dimethylallyladenosine synthase from Legionella pneumophila (strain Paris).